Consider the following 384-residue polypeptide: Succinate--CoA ligase [ADP-forming] subunit beta (384 aa).

Residues 9-242 (KAILAQYKVP…LNEEDPLEVE (234 aa)) form the ATP-grasp domain. ATP contacts are provided by residues Lys45, 52-54 (GRG), Glu98, Leu101, and Glu106. 2 residues coordinate Mg(2+): Asn197 and Asp211. Residues Asn262 and 319–321 (GIL) each bind substrate.

Belongs to the succinate/malate CoA ligase beta subunit family. Heterotetramer of two alpha and two beta subunits. Requires Mg(2+) as cofactor.

The catalysed reaction is succinate + ATP + CoA = succinyl-CoA + ADP + phosphate. It carries out the reaction GTP + succinate + CoA = succinyl-CoA + GDP + phosphate. It participates in carbohydrate metabolism; tricarboxylic acid cycle; succinate from succinyl-CoA (ligase route): step 1/1. Its function is as follows. Succinyl-CoA synthetase functions in the citric acid cycle (TCA), coupling the hydrolysis of succinyl-CoA to the synthesis of either ATP or GTP and thus represents the only step of substrate-level phosphorylation in the TCA. The beta subunit provides nucleotide specificity of the enzyme and binds the substrate succinate, while the binding sites for coenzyme A and phosphate are found in the alpha subunit. The protein is Succinate--CoA ligase [ADP-forming] subunit beta of Solibacter usitatus (strain Ellin6076).